The sequence spans 223 residues: Transcriptional regulatory protein HprR (223 aa).

In terms of domain architecture, Response regulatory spans 2–115 (KILLIEDNQR…ELLARVRAQL (114 aa)). Asp-51 is subject to 4-aspartylphosphate. A DNA-binding region (ompR/PhoB-type) is located at residues 122 to 220 (NSTLEISGLR…IRGMGYSFVA (99 aa)).

In terms of processing, phosphorylated by HprS.

The protein resides in the cytoplasm. Member of a two-component regulatory system HprR/HprS involved in response to hydrogen peroxide. Regulates the expression of at least 5 operons, cyoABCDE, hprRS, hiuH, cusRS and cusCFBA. Bifunctional regulator that acts as an activator and a repressor. This chain is Transcriptional regulatory protein HprR, found in Escherichia coli (strain K12).